The following is a 175-amino-acid chain: Cell division protein SepF (175 aa).

Positions 20–29 are enriched in acidic residues; the sequence is RYEDYDDYDD. Positions 20-88 are disordered; the sequence is RYEDYDDYDD…ERPTPPLRVT (69 aa). Basic and acidic residues-rich tracts occupy residues 30–47 and 54–73; these read AEPHRREPREAVERDLGS and RRMDARESSPADPAELRRVS.

This sequence belongs to the SepF family. Homodimer. Interacts with FtsZ.

It is found in the cytoplasm. Functionally, cell division protein that is part of the divisome complex and is recruited early to the Z-ring. Probably stimulates Z-ring formation, perhaps through the cross-linking of FtsZ protofilaments. Its function overlaps with FtsA. In Acidothermus cellulolyticus (strain ATCC 43068 / DSM 8971 / 11B), this protein is Cell division protein SepF.